Here is a 342-residue protein sequence, read N- to C-terminus: Protein pelota homolog (342 aa).

This sequence belongs to the eukaryotic release factor 1 family. Pelota subfamily. As to quaternary structure, monomer. It depends on a divalent metal cation as a cofactor.

Its subcellular location is the cytoplasm. In terms of biological role, may function in recognizing stalled ribosomes, interact with stem-loop structures in stalled mRNA molecules, and effect endonucleolytic cleavage of the mRNA. May play a role in the release non-functional ribosomes and degradation of damaged mRNAs. Has endoribonuclease activity. The sequence is that of Protein pelota homolog from Methanocorpusculum labreanum (strain ATCC 43576 / DSM 4855 / Z).